We begin with the raw amino-acid sequence, 238 residues long: Tetraspanin-4 (238 aa).

Residues 1–13 are Cytoplasmic-facing; it reads MARGCLQGVKYLM. A helical transmembrane segment spans residues 14-34; that stretch reads FAFNLLFWLGGCGVLGVGIWL. The Extracellular segment spans residues 35 to 55; sequence AATQGNFATLSSSFPSLSAAN. The chain crosses the membrane as a helical span at residues 56 to 76; that stretch reads LLIVTGTFVMAIGFVGCIGAL. Residues 77–85 are Cytoplasmic-facing; the sequence is KENKCLLLT. The chain crosses the membrane as a helical span at residues 86–106; it reads FFVLLLLVFLLEATIAVLFFA. Over 107–201 the chain is Extracellular; it reads YSDKIDSYAQ…ETVKAWLQEN (95 aa). N-linked (GlcNAc...) asparagine glycosylation is found at Asn152 and Asn161. The chain crosses the membrane as a helical span at residues 202 to 222; it reads LLAVGIFGLCTALVQILGLTF. The Cytoplasmic portion of the chain corresponds to 223–238; the sequence is AMTMYCQVVKADTYCA.

This sequence belongs to the tetraspanin (TM4SF) family. In terms of assembly, forms a complex with integrins.

The protein resides in the membrane. The chain is Tetraspanin-4 (Tspan4) from Mus musculus (Mouse).